The chain runs to 209 residues: Guanylate kinase (209 aa).

One can recognise a Guanylate kinase-like domain in the interval 7–185 (GNLYIVAAPS…AAMELQSIVI (179 aa)). Residue 14–21 (APSGGGKT) coordinates ATP.

This sequence belongs to the guanylate kinase family.

Its subcellular location is the cytoplasm. The enzyme catalyses GMP + ATP = GDP + ADP. Its function is as follows. Essential for recycling GMP and indirectly, cGMP. This chain is Guanylate kinase, found in Legionella pneumophila (strain Paris).